The primary structure comprises 86 residues: Arminin 7246 (86 aa).

The N-terminal stretch at methionine 1 to alanine 18 is a signal peptide. The propeptide occupies arginine 19–alanine 57. Alanine 83 carries the alanine amide modification.

Belongs to the arminin family. In terms of tissue distribution, expressed in entodermal epithelium along the body column.

It is found in the secreted. Its subcellular location is the target cell membrane. Antimicrobial peptide with a broad-spectrum antimicrobial activity. Keeps its antibacterial activity under a wide range of salt concentrations that mimic physiological conditions of human blood, which is surprising, since Hydra is an obligate freshwater animal with nearly no salt tolerance. Does not affect red blood cells. The chain is Arminin 7246 from Hydra viridissima (Green hydra).